The sequence spans 549 residues: Cytoplasmic trehalase (549 aa).

Substrate-binding positions include Arg-168, 175 to 176, Asn-212, 221 to 223, 292 to 294, and Gly-324; these read WD, RSQ, and RDE. Active-site proton donor/acceptor residues include Asp-326 and Glu-509. Glu-525 is a binding site for substrate.

This sequence belongs to the glycosyl hydrolase 37 family. In terms of assembly, monomer.

Its subcellular location is the cytoplasm. The enzyme catalyses alpha,alpha-trehalose + H2O = alpha-D-glucose + beta-D-glucose. It participates in glycan degradation; trehalose degradation; D-glucose from alpha,alpha-trehalose: step 1/1. Its function is as follows. Hydrolyzes trehalose to glucose. Could be involved, in cells returning to low osmolarity conditions, in the utilization of the accumulated cytoplasmic trehalose, which was synthesized in response to high osmolarity. The protein is Cytoplasmic trehalase of Escherichia coli O139:H28 (strain E24377A / ETEC).